The sequence spans 49 residues: Large ribosomal subunit protein bL32c (49 aa).

Positions 1 to 23 (MTPKKRKSKSKKNLRKTNWKKKA) are disordered.

This sequence belongs to the bacterial ribosomal protein bL32 family.

It localises to the plastid. The protein localises to the chloroplast. The protein is Large ribosomal subunit protein bL32c of Oltmannsiellopsis viridis (Marine flagellate).